Reading from the N-terminus, the 241-residue chain is Xyloglucan-specific endo-beta-1,4-glucanase A (241 aa).

The N-terminal stretch at 1 to 16 (MKVLALSALLSLASAA) is a signal peptide. Asn-47 is a glycosylation site (N-linked (GlcNAc...) asparagine).

Belongs to the glycosyl hydrolase 12 (cellulase H) family.

The protein resides in the secreted. The catalysed reaction is xyloglucan + H2O = xyloglucan oligosaccharides.. Its function is as follows. Catalyzes endohydrolysis of 1,4-beta-D-glucosidic linkages in xyloglucan with retention of the beta-configuration of the glycosyl residues. Specific for xyloglucan and does not hydrolyze other cell wall components. The chain is Xyloglucan-specific endo-beta-1,4-glucanase A (xgeA) from Aspergillus niger.